Consider the following 225-residue polypeptide: UPF0758 protein BAMEG_4721 (225 aa).

The 123-residue stretch at 103–225 (SIRSPEDCAT…FVSLKEKGHI (123 aa)) folds into the MPN domain. 3 residues coordinate Zn(2+): H174, H176, and D187. A JAMM motif motif is present at residues 174–187 (HNHPSGDPAPSRED).

It belongs to the UPF0758 family.

This chain is UPF0758 protein BAMEG_4721, found in Bacillus anthracis (strain CDC 684 / NRRL 3495).